A 54-amino-acid polypeptide reads, in one-letter code: Ovomucoid (54 aa).

The 51-residue stretch at 4 to 54 folds into the Kazal-like domain; that stretch reads VDCSDYPKPACTLEYMPLCGSDNKTYGNKCNFCNAVVDSNGTLTLSHFGKC. 3 disulfide bridges follow: Cys-6–Cys-36, Cys-14–Cys-33, and Cys-22–Cys-54. N-linked (GlcNAc...) asparagine glycosylation is present at Asn-43.

The protein localises to the secreted. The polypeptide is Ovomucoid (Dendrocygna arcuata (Wandering whistling-duck)).